The primary structure comprises 723 residues: Polyribonucleotide nucleotidyltransferase (723 aa).

2 residues coordinate Mg(2+): D488 and D494. Residues 555–614 (PRMITMKIHPDKIREVIGKGGSTIQALTKETGTTIDIQEDGTITIASTSTEGMAEAKRRI) enclose the KH domain. One can recognise an S1 motif domain in the interval 624-692 (GKIYAGTVLK…EKGRLRLSLK (69 aa)). Residues 701–723 (SISPINAGESAAPAAPAGGSEQQ) form a disordered region. Over residues 707–723 (AGESAAPAAPAGGSEQQ) the composition is skewed to low complexity.

Belongs to the polyribonucleotide nucleotidyltransferase family. Mg(2+) serves as cofactor.

It is found in the cytoplasm. It catalyses the reaction RNA(n+1) + phosphate = RNA(n) + a ribonucleoside 5'-diphosphate. Its function is as follows. Involved in mRNA degradation. Catalyzes the phosphorolysis of single-stranded polyribonucleotides processively in the 3'- to 5'-direction. This is Polyribonucleotide nucleotidyltransferase from Cupriavidus taiwanensis (strain DSM 17343 / BCRC 17206 / CCUG 44338 / CIP 107171 / LMG 19424 / R1) (Ralstonia taiwanensis (strain LMG 19424)).